The chain runs to 92 residues: MKRVHVLVAGRVQGVWYRASAARKASELGLTGWVRNLPDGRVELVAEGDAESVDALLAWCRRGPPLARVTGLDVREMAVTGEFTEFAVLRDV.

Residues 3–90 enclose the Acylphosphatase-like domain; that stretch reads RVHVLVAGRV…GEFTEFAVLR (88 aa). Active-site residues include arginine 18 and asparagine 36.

Belongs to the acylphosphatase family.

The catalysed reaction is an acyl phosphate + H2O = a carboxylate + phosphate + H(+). This chain is Acylphosphatase (acyP), found in Methylococcus capsulatus (strain ATCC 33009 / NCIMB 11132 / Bath).